Reading from the N-terminus, the 1034-residue chain is Potassium-transporting ATPase alpha chain 1 (1034 aa).

Residues 1–97 (MGKAENYELY…NALRPPRGTP (97 aa)) lie on the Cytoplasmic side of the membrane. Tyrosine 7 and tyrosine 10 each carry phosphotyrosine. The interval 14-41 (LGSGPGGDMTAKMSKKKAGGGGGKKKEK) is disordered. Positions 26–39 (MSKKKAGGGGGKKK) are enriched in basic residues. Serine 27 carries the post-translational modification Phosphoserine. Residues 98 to 118 (EYVKFARQLAGGLQCLMWVAA) form a helical membrane-spanning segment. The Lumenal segment spans residues 119–141 (AICLIAFAIQASEGDLTTDDNLY). The helical transmembrane segment at 142 to 162 (LAVALIAVVVVTGCFGYYQEF) threads the bilayer. Over 163 to 298 (KSTNIIASFK…NEKTPIAIEI (136 aa)) the chain is Cytoplasmic. A helical membrane pass occupies residues 299–318 (EHFVDIIAGLAILFGATFFV). The Lumenal portion of the chain corresponds to 319 to 330 (VAMCIGYTFLRA). Residues 331 to 348 (MVFFMAIVVAYVPEGLLA) traverse the membrane as a helical segment. Residues valine 339, alanine 340, valine 342, and glutamate 344 each contribute to the K(+) site. The Cytoplasmic segment spans residues 349 to 782 (TVTVCLSLTA…EQGRLIFDNL (434 aa)). Aspartate 386 (4-aspartylphosphate intermediate) is an active-site residue. Positions 386 and 388 each coordinate Mg(2+). 2 positions are modified to phosphoserine: serine 462 and serine 600. Positions 727 and 731 each coordinate Mg(2+). The helical transmembrane segment at 783 to 802 (KKSIAYTLTKNIPELTPYLI) threads the bilayer. Position 796 (glutamate 796) interacts with K(+). The Lumenal segment spans residues 803-812 (YITVSVPLPL). Residues 813-833 (GCITILFIELCTDIFPSVSLA) traverse the membrane as a helical segment. K(+) is bound at residue glutamate 821. The Cytoplasmic segment spans residues 834–853 (YEKAESDIMHLRPRNPKRDR). Serine 839 is subject to Phosphoserine. A helical transmembrane segment spans residues 854–876 (LVNEPLAAYSYFQIGAIQSFAGF). Residues 877-928 (ADYFTAMAQEGWFPLLCVGLRPQWEDHHLQDLQDSYGQEWTFGQRLYQQYTC) are Lumenal-facing. The chain crosses the membrane as a helical span at residues 929 to 948 (YTVFFISIEMCQIADVLIRK). At 949-962 (TRRLSVFQQGFFRN) the chain is on the cytoplasmic side. Position 953 is a phosphoserine; by PKA (serine 953). Residues 963 to 981 (KILVIAIVFQVCIGCFLCY) form a helical membrane-spanning segment. The Lumenal portion of the chain corresponds to 982 to 996 (CPGMPNIFNFMPIRF). A helical transmembrane segment spans residues 997-1017 (QWWLVPMPFGLLIFVYDEIRK). Residues 1018–1034 (LGVRCCPGSWWDQELYY) lie on the Cytoplasmic side of the membrane.

Belongs to the cation transport ATPase (P-type) (TC 3.A.3) family. Type IIC subfamily. As to quaternary structure, the gastric H(+)/K(+) ATPase pump is composed of the catalytic alpha subunit ATP4A and the regulatory beta subunit ATP4B. Interacts (via the P-domain) with ATP4B (via N-terminus); this interaction stabilizes the lumenal-open E2 conformation state and prevents the reverse reaction of the transport cycle. In terms of tissue distribution, expressed in parietal cells (at protein level).

It localises to the apical cell membrane. It catalyses the reaction K(+)(out) + ATP + H2O + H(+)(in) = K(+)(in) + ADP + phosphate + 2 H(+)(out). The catalytic subunit of the gastric H(+)/K(+) ATPase pump which transports H(+) ions in exchange for K(+) ions across the apical membrane of parietal cells. Uses ATP as an energy source to pump H(+) ions to the gastric lumen while transporting K(+) ion from the lumen into the cell. Remarkably generates a million-fold proton gradient across the gastric parietal cell membrane, acidifying the gastric juice down to pH 1. Within a transport cycle, the transfer of a H(+) ion across the membrane is coupled to ATP hydrolysis and is associated with a transient phosphorylation that shifts the pump conformation from inward-facing (E1) to outward-facing state (E2). The release of the H(+) ion in the stomach lumen is followed by binding of K(+) ion converting the pump conformation back to the E1 state. This chain is Potassium-transporting ATPase alpha chain 1, found in Mus musculus (Mouse).